The primary structure comprises 460 residues: ATP synthase subunit beta (460 aa).

Residue 150–157 participates in ATP binding; that stretch reads GGAGVGKT.

This sequence belongs to the ATPase alpha/beta chains family. F-type ATPases have 2 components, CF(1) - the catalytic core - and CF(0) - the membrane proton channel. CF(1) has five subunits: alpha(3), beta(3), gamma(1), delta(1), epsilon(1). CF(0) has three main subunits: a(1), b(2) and c(9-12). The alpha and beta chains form an alternating ring which encloses part of the gamma chain. CF(1) is attached to CF(0) by a central stalk formed by the gamma and epsilon chains, while a peripheral stalk is formed by the delta and b chains.

It localises to the cell inner membrane. The catalysed reaction is ATP + H2O + 4 H(+)(in) = ADP + phosphate + 5 H(+)(out). Its function is as follows. Produces ATP from ADP in the presence of a proton gradient across the membrane. The catalytic sites are hosted primarily by the beta subunits. In Salmonella gallinarum (strain 287/91 / NCTC 13346), this protein is ATP synthase subunit beta.